The sequence spans 456 residues: Cysteine--tRNA ligase (456 aa).

Cysteine 28 provides a ligand contact to Zn(2+). A 'HIGH' region motif is present at residues 30 to 40; that stretch reads MTVYDYCHLGH. Positions 209, 234, and 238 each coordinate Zn(2+). A 'KMSKS' region motif is present at residues 266–270; sequence KMSKS. ATP is bound at residue lysine 269.

It belongs to the class-I aminoacyl-tRNA synthetase family. Monomer. Zn(2+) is required as a cofactor.

It localises to the cytoplasm. The enzyme catalyses tRNA(Cys) + L-cysteine + ATP = L-cysteinyl-tRNA(Cys) + AMP + diphosphate. The chain is Cysteine--tRNA ligase from Dechloromonas aromatica (strain RCB).